The primary structure comprises 943 residues: 2-oxoglutarate dehydrogenase E1 component (943 aa).

The protein belongs to the alpha-ketoglutarate dehydrogenase family. In terms of assembly, homodimer. Part of the 2-oxoglutarate dehydrogenase (OGDH) complex composed of E1 (2-oxoglutarate dehydrogenase), E2 (dihydrolipoamide succinyltransferase) and E3 (dihydrolipoamide dehydrogenase); the complex contains multiple copies of the three enzymatic components (E1, E2 and E3). Thiamine diphosphate serves as cofactor.

It catalyses the reaction N(6)-[(R)-lipoyl]-L-lysyl-[protein] + 2-oxoglutarate + H(+) = N(6)-[(R)-S(8)-succinyldihydrolipoyl]-L-lysyl-[protein] + CO2. In terms of biological role, E1 component of the 2-oxoglutarate dehydrogenase (OGDH) complex which catalyzes the decarboxylation of 2-oxoglutarate, the first step in the conversion of 2-oxoglutarate to succinyl-CoA and CO(2). This chain is 2-oxoglutarate dehydrogenase E1 component (sucA), found in Azotobacter vinelandii.